The following is a 168-amino-acid chain: Xanthine-guanine phosphoribosyltransferase (168 aa).

5-phospho-alpha-D-ribose 1-diphosphate-binding positions include arginine 43–glycine 44 and aspartate 102–threonine 110. Aspartate 103 lines the Mg(2+) pocket. Residues aspartate 106 and isoleucine 149 each contribute to the guanine site. Xanthine is bound by residues aspartate 106 and isoleucine 149. GMP-binding positions include aspartate 106–threonine 110 and tryptophan 148–isoleucine 149.

The protein belongs to the purine/pyrimidine phosphoribosyltransferase family. XGPT subfamily. Homotetramer. The cofactor is Mg(2+).

It is found in the cell inner membrane. It carries out the reaction GMP + diphosphate = guanine + 5-phospho-alpha-D-ribose 1-diphosphate. It catalyses the reaction XMP + diphosphate = xanthine + 5-phospho-alpha-D-ribose 1-diphosphate. The catalysed reaction is IMP + diphosphate = hypoxanthine + 5-phospho-alpha-D-ribose 1-diphosphate. Its pathway is purine metabolism; GMP biosynthesis via salvage pathway; GMP from guanine: step 1/1. The protein operates within purine metabolism; XMP biosynthesis via salvage pathway; XMP from xanthine: step 1/1. Purine salvage pathway enzyme that catalyzes the transfer of the ribosyl-5-phosphate group from 5-phospho-alpha-D-ribose 1-diphosphate (PRPP) to the N9 position of the 6-oxopurines guanine and xanthine to form the corresponding ribonucleotides GMP (guanosine 5'-monophosphate) and XMP (xanthosine 5'-monophosphate), with the release of PPi. To a lesser extent, also acts on hypoxanthine. In Nitrobacter winogradskyi (strain ATCC 25391 / DSM 10237 / CIP 104748 / NCIMB 11846 / Nb-255), this protein is Xanthine-guanine phosphoribosyltransferase.